Here is a 222-residue protein sequence, read N- to C-terminus: Kinetochore protein Spc25 (222 aa).

A coiled-coil region spans residues Arg51 to Ala86.

It belongs to the SPC25 family. Component of the Ndc80 complex, which is composed of Ndc80, Nuf2 and Spc25.

The protein localises to the nucleus. It is found in the chromosome. The protein resides in the centromere. It localises to the kinetochore. Its function is as follows. Acts as a component of the essential kinetochore-associated Ndc80 complex, which is required for chromosome segregation and spindle checkpoint activity during meiosis and mitosis. Required for kinetochore integrity and the organization of stable microtubule binding sites in the outer plate of the kinetochore. Participates in SAC signaling that responds specifically to disruptions in spindle microtubule dynamics. The NDC80 complex synergistically enhances the affinity of the SKA1 complex for microtubules and may allow the NDC80 complex to track depolymerizing microtubules. The chain is Kinetochore protein Spc25 from Drosophila melanogaster (Fruit fly).